Reading from the N-terminus, the 1186-residue chain is ATP-dependent helicase/nuclease subunit A (1186 aa).

The region spanning 2–460 (NFSKNQRAVI…IELSENYRSQ (459 aa)) is the UvrD-like helicase ATP-binding domain. ATP is bound at residue 23 to 30 (ASAGSGKT). Positions 487–771 (DVELKAANRD…SVMTIHAAKG (285 aa)) constitute a UvrD-like helicase C-terminal domain.

Belongs to the helicase family. AddA subfamily. In terms of assembly, heterodimer of AddA and AddB/RexB. Requires Mg(2+) as cofactor.

It carries out the reaction Couples ATP hydrolysis with the unwinding of duplex DNA by translocating in the 3'-5' direction.. It catalyses the reaction ATP + H2O = ADP + phosphate + H(+). In terms of biological role, the heterodimer acts as both an ATP-dependent DNA helicase and an ATP-dependent, dual-direction single-stranded exonuclease. Recognizes the chi site generating a DNA molecule suitable for the initiation of homologous recombination. The AddA nuclease domain is required for chi fragment generation; this subunit has the helicase and 3' -&gt; 5' nuclease activities. The sequence is that of ATP-dependent helicase/nuclease subunit A from Oenococcus oeni (strain ATCC BAA-331 / PSU-1).